The following is a 338-amino-acid chain: Heat-inducible transcription repressor HrcA (338 aa).

The protein belongs to the HrcA family.

Negative regulator of class I heat shock genes (grpE-dnaK-dnaJ and groELS operons). Prevents heat-shock induction of these operons. This Thermotoga maritima (strain ATCC 43589 / DSM 3109 / JCM 10099 / NBRC 100826 / MSB8) protein is Heat-inducible transcription repressor HrcA.